The primary structure comprises 370 residues: Gap junction delta-4 protein (370 aa).

Over 1 to 19 the chain is Cytoplasmic; sequence MEGVDLLGFLIITLNCNVT. Residues 20-40 traverse the membrane as a helical segment; sequence MXGKLWFVLTMLLRMLVIVLA. Over 41-76 the chain is Extracellular; it reads GRPVYQDEQERFVCNTLQPGCANVCYDVFSPVSHLR. The helical transmembrane segment at 77-97 threads the bilayer; that stretch reads FWLIQGVCVLLPSAVFSVYVL. Topologically, residues 98 to 146 are cytoplasmic; sequence HRGATLAALGPRRCPEPRDTASGQRRCPGSCRERGGLEVPDFSAGYIIH. A helical transmembrane segment spans residues 147 to 167; that stretch reads LLLRTLLEAAFGALNYLLFGF. The Extracellular portion of the chain corresponds to 168–196; that stretch reads LAPNKFPCTRPPCTGVVDCYVSRPTEKSL. A helical membrane pass occupies residues 197–217; it reads LMLFLWAVSALSFLLGLADLV. Topologically, residues 218 to 370 are cytoplasmic; it reads CSLRRLMRRR…HLRARKSEWV (153 aa). The tract at residues 227–370 is disordered; sequence RPGPPTSPSI…HLRARKSEWV (144 aa). Over residues 246 to 260 the composition is skewed to basic and acidic residues; sequence PEGRPTDKEGGREQE. The segment covering 331–345 has biased composition (low complexity); it reads PSAAPSHLAAHPSCS.

The protein belongs to the connexin family. Delta-type subfamily. As to quaternary structure, a connexon is composed of a hexamer of connexins.

It is found in the cell membrane. The protein resides in the cell junction. The protein localises to the gap junction. One gap junction consists of a cluster of closely packed pairs of transmembrane channels, the connexons, through which materials of low MW diffuse from one cell to a neighboring cell. In Macaca fascicularis (Crab-eating macaque), this protein is Gap junction delta-4 protein (GJD4).